The primary structure comprises 181 residues: Inner membrane-spanning protein YciB (181 aa).

A run of 5 helical transmembrane segments spans residues 19–39, 50–70, 80–100, 118–138, and 148–168; these read FFDIYAATGALIVATLIQLIA, MHLITFALVASFGTATLIFHD, IVYALFAIALIAGQFLGKPIL, LTWYWVLFFVACGLINIYVAF, and FKVFGLTAATLVNTLLTVVYL.

The protein belongs to the YciB family.

The protein localises to the cell inner membrane. Functionally, plays a role in cell envelope biogenesis, maintenance of cell envelope integrity and membrane homeostasis. This Shewanella amazonensis (strain ATCC BAA-1098 / SB2B) protein is Inner membrane-spanning protein YciB.